The chain runs to 82 residues: Progonadoliberin-3 (82 aa).

Residues 1–23 (MDLSNRTVVQVVVLALVAQVTLS) form the signal peptide. Glutamine 24 is subject to Pyrrolidone carboxylic acid. Position 33 is a glycine amide (glycine 33).

It belongs to the GnRH family. Brain.

It is found in the secreted. Its function is as follows. Stimulates the secretion of gonadotropins. The polypeptide is Progonadoliberin-3 (gnrh3) (Oncorhynchus nerka (Sockeye salmon)).